The sequence spans 117 residues: Ribonuclease P protein component 4 (117 aa).

Residues Cys64, Cys67, Cys93, and Cys96 each contribute to the Zn(2+) site.

Belongs to the eukaryotic/archaeal RNase P protein component 4 family. Consists of a catalytic RNA component and at least 4-5 protein subunits. The cofactor is Zn(2+).

The protein resides in the cytoplasm. The catalysed reaction is Endonucleolytic cleavage of RNA, removing 5'-extranucleotides from tRNA precursor.. Functionally, part of ribonuclease P, a protein complex that generates mature tRNA molecules by cleaving their 5'-ends. The sequence is that of Ribonuclease P protein component 4 from Pyrococcus abyssi (strain GE5 / Orsay).